The following is a 389-amino-acid chain: Multidrug resistance protein 1 (389 aa).

Helical transmembrane passes span Ile-6 to Ile-26, Ala-42 to Gly-62, Lys-71 to Gly-91, Met-102 to Ile-122, Tyr-134 to Ala-154, Leu-160 to Leu-180, Ile-202 to Ala-222, Ile-243 to Asp-263, Val-286 to Phe-306, Ser-336 to Ile-356, and Val-358 to Ala-378.

This sequence belongs to the major facilitator superfamily. TCR/Tet family.

The protein resides in the cell membrane. Energy-dependent efflux pump responsible for decreased drug accumulation in multi-drug-resistant cells. Probably uses a transmembrane proton gradient as the energy source. Causes the efflux of a variety of toxic substances, including such structurally diverse compounds as ethidium bromide, rhodamine and acridine dyes, tetraphenylphosphonium, puromycin, chloramphenicol, doxorubicin, and fluoroquinolone antibiotics. The sequence is that of Multidrug resistance protein 1 (bmr) from Bacillus subtilis (strain 168).